The primary structure comprises 353 residues: tRNA pseudouridine synthase B (353 aa).

Catalysis depends on Asp39, which acts as the Nucleophile.

Belongs to the pseudouridine synthase TruB family. Type 1 subfamily.

The catalysed reaction is uridine(55) in tRNA = pseudouridine(55) in tRNA. Functionally, responsible for synthesis of pseudouridine from uracil-55 in the psi GC loop of transfer RNAs. This chain is tRNA pseudouridine synthase B, found in Wolbachia pipientis subsp. Culex pipiens (strain wPip).